Reading from the N-terminus, the 572-residue chain is Proline--tRNA ligase (572 aa).

It belongs to the class-II aminoacyl-tRNA synthetase family. ProS type 1 subfamily. Homodimer.

Its subcellular location is the cytoplasm. The catalysed reaction is tRNA(Pro) + L-proline + ATP = L-prolyl-tRNA(Pro) + AMP + diphosphate. Functionally, catalyzes the attachment of proline to tRNA(Pro) in a two-step reaction: proline is first activated by ATP to form Pro-AMP and then transferred to the acceptor end of tRNA(Pro). As ProRS can inadvertently accommodate and process non-cognate amino acids such as alanine and cysteine, to avoid such errors it has two additional distinct editing activities against alanine. One activity is designated as 'pretransfer' editing and involves the tRNA(Pro)-independent hydrolysis of activated Ala-AMP. The other activity is designated 'posttransfer' editing and involves deacylation of mischarged Ala-tRNA(Pro). The misacylated Cys-tRNA(Pro) is not edited by ProRS. The chain is Proline--tRNA ligase from Escherichia fergusonii (strain ATCC 35469 / DSM 13698 / CCUG 18766 / IAM 14443 / JCM 21226 / LMG 7866 / NBRC 102419 / NCTC 12128 / CDC 0568-73).